Consider the following 394-residue polypeptide: Phosphoglycerate kinase (394 aa).

Substrate is bound by residues Asp21–Asn23, His59–Arg62, Arg117, and Arg150. ATP-binding positions include Lys201, Glu318, and Gly344–Thr347.

It belongs to the phosphoglycerate kinase family. As to quaternary structure, monomer.

Its subcellular location is the cytoplasm. It catalyses the reaction (2R)-3-phosphoglycerate + ATP = (2R)-3-phospho-glyceroyl phosphate + ADP. Its pathway is carbohydrate degradation; glycolysis; pyruvate from D-glyceraldehyde 3-phosphate: step 2/5. The chain is Phosphoglycerate kinase from Blochmanniella pennsylvanica (strain BPEN).